The primary structure comprises 168 residues: Crossover junction endodeoxyribonuclease RuvC (168 aa).

Catalysis depends on residues Asp-10, Glu-70, and Asp-143. The Mg(2+) site is built by Asp-10, Glu-70, and Asp-143.

It belongs to the RuvC family. Homodimer which binds Holliday junction (HJ) DNA. The HJ becomes 2-fold symmetrical on binding to RuvC with unstacked arms; it has a different conformation from HJ DNA in complex with RuvA. In the full resolvosome a probable DNA-RuvA(4)-RuvB(12)-RuvC(2) complex forms which resolves the HJ. It depends on Mg(2+) as a cofactor.

The protein localises to the cytoplasm. It carries out the reaction Endonucleolytic cleavage at a junction such as a reciprocal single-stranded crossover between two homologous DNA duplexes (Holliday junction).. Functionally, the RuvA-RuvB-RuvC complex processes Holliday junction (HJ) DNA during genetic recombination and DNA repair. Endonuclease that resolves HJ intermediates. Cleaves cruciform DNA by making single-stranded nicks across the HJ at symmetrical positions within the homologous arms, yielding a 5'-phosphate and a 3'-hydroxyl group; requires a central core of homology in the junction. The consensus cleavage sequence is 5'-(A/T)TT(C/G)-3'. Cleavage occurs on the 3'-side of the TT dinucleotide at the point of strand exchange. HJ branch migration catalyzed by RuvA-RuvB allows RuvC to scan DNA until it finds its consensus sequence, where it cleaves and resolves the cruciform DNA. In Roseiflexus sp. (strain RS-1), this protein is Crossover junction endodeoxyribonuclease RuvC.